The following is a 133-amino-acid chain: p53 and DNA damage-regulated protein 1 (133 aa).

The protein belongs to the prefoldin subunit beta family. In terms of assembly, component of the PAQosome complex which is responsible for the biogenesis of several protein complexes and which consists of R2TP complex members RUVBL1, RUVBL2, RPAP3 and PIH1D1, URI complex members PFDN2, PFDN6, PDRG1, UXT and URI1 as well as ASDURF, POLR2E and DNAAF10/WDR92.

It is found in the cytoplasm. May play a role in chaperone-mediated protein folding. In Bos taurus (Bovine), this protein is p53 and DNA damage-regulated protein 1 (PDRG1).